A 188-amino-acid polypeptide reads, in one-letter code: Peptidyl-tRNA hydrolase (188 aa).

Phe14 lines the tRNA pocket. Residue His19 is the Proton acceptor of the active site. Tyr64, Asn66, and Asn112 together coordinate tRNA.

The protein belongs to the PTH family. In terms of assembly, monomer.

The protein resides in the cytoplasm. The enzyme catalyses an N-acyl-L-alpha-aminoacyl-tRNA + H2O = an N-acyl-L-amino acid + a tRNA + H(+). Its function is as follows. Hydrolyzes ribosome-free peptidyl-tRNAs (with 1 or more amino acids incorporated), which drop off the ribosome during protein synthesis, or as a result of ribosome stalling. Functionally, catalyzes the release of premature peptidyl moieties from peptidyl-tRNA molecules trapped in stalled 50S ribosomal subunits, and thus maintains levels of free tRNAs and 50S ribosomes. The protein is Peptidyl-tRNA hydrolase of Onion yellows phytoplasma (strain OY-M).